The chain runs to 520 residues: MAEIKNAKVEQRQTKIRNVPVAVTPEGFWCCPSPVAFQKTLKSHNSLTKHKQSSPALQPPKPEKKPSSTTIRSVIASDETQQNLGSFDTVHSIAVPATVQERPQRQKVETLPRKVAIEFGEPGSSDAKVILVGKQGFCVKLSVHKKVLVDHSCFFAKKLAEKDSVFACLEIESCEDAELYVETIGLMYCKDMKQRLMKQNVSRVLRVLKVAELLGFSSCIQSCLDYLEAVPWVGEEEEEKVISSILRLKTEGVGVTPVLKRVASNAVDPPKETLSRIIELVLRSKEEKSRREMKSIVLKLLREQNGANVADNFNDTIYSSCQTCLDSVLSLFKQASEGEKPETDTKQIAVEADNLTWLLDVLAERQAAEEFSVTWANQKELALLHEKLPLMSRYHISRVTSRLFIGIGRGELLPSKDTRLLLLTTWLQPLFNDYNWLQHGCRSFDGKLVEEGIGRTILTLPLEDQQSILLSWLGSFLNGGDGCPNLQRAFEVWWRRSFIRPYSDRQANGSCQTDSTSKEE.

A disordered region spans residues 43 to 68 (SHNSLTKHKQSSPALQPPKPEKKPSS). In terms of domain architecture, BTB spans 127–196 (AKVILVGKQG…MYCKDMKQRL (70 aa)).

Its pathway is protein modification; protein ubiquitination. In terms of biological role, may act as a substrate-specific adapter of an E3 ubiquitin-protein ligase complex (CUL3-RBX1-BTB) which mediates the ubiquitination and subsequent proteasomal degradation of target proteins. This is BTB/POZ domain-containing protein At3g50780 from Arabidopsis thaliana (Mouse-ear cress).